A 742-amino-acid chain; its full sequence is Two pore calcium channel protein 1 (742 aa).

Residues Met1–Lys37 form a disordered region. Residues Met1–Ser82 are Cytoplasmic-facing. A helical transmembrane segment spans residues Phe83–Leu103. The Extracellular segment spans residues Leu104 to Ser140. A helical membrane pass occupies residues Leu141 to Tyr161. Over Glu162–Lys176 the chain is Cytoplasmic. A helical transmembrane segment spans residues Ile177–Phe197. Residues Arg198–Arg204 lie on the Extracellular side of the membrane. Residues Val205 to Ile226 form a helical; Voltage-sensor membrane-spanning segment. Residues Gly227–Ala247 traverse the membrane as a helical segment. At Tyr248–Lys258 the chain is on the extracellular side. The pore-forming intramembrane region spans Thr259–Val273. Residues Leu274–Leu296 are Extracellular-facing. Residues Phe297 to Ile317 traverse the membrane as a helical segment. The Cytoplasmic segment spans residues Tyr318–Tyr446. 2 consecutive EF-hand domains span residues Ile335–Tyr370 and Thr376–Lys411. The chain crosses the membrane as a helical span at residues Ile447–Ile467. At Glu468 to Glu480 the chain is on the extracellular side. N-linked (GlcNAc...) asparagine glycosylation occurs at Asn469. Residues Phe481 to Gly501 form a helical membrane-spanning segment. Over Ala502–Lys510 the chain is Cytoplasmic. A helical transmembrane segment spans residues Phe511–Ser531. At Lys532–Glu540 the chain is on the extracellular side. Residues Trp541 to Leu558 form a helical; Voltage-sensor membrane-spanning segment. The Cytoplasmic portion of the chain corresponds to Gln559–Gly582. The chain crosses the membrane as a helical span at residues Ile583–Val603. Residues Tyr604–Asp627 lie on the Extracellular side of the membrane. The segment at residues Tyr628–Gly642 is an intramembrane region (pore-forming). Residues Asn643 to Tyr663 are Extracellular-facing. A helical transmembrane segment spans residues Phe664–Leu684. Residues Glu685–Ser742 lie on the Cytoplasmic side of the membrane.

It belongs to the calcium channel alpha-1 subunit (TC 1.A.1.11) family. Two pore calcium channel subfamily. Homodimer.

The protein resides in the membrane. With respect to regulation, inhibited by Al(3+). Functions as a voltage-gated inward-rectifying Ca(2+) channel (VDCC) across the plasma membrane that mediates sucrose-induced Ca(2+) influx in autotrophically grown leaf cells. Acts as the major ROS-responsive Ca(2+) channel and is the possible target of Al-dependent inhibition. Plays a regulatory role in defense responses. The chain is Two pore calcium channel protein 1 (TPC1) from Triticum aestivum (Wheat).